The sequence spans 542 residues: CTP synthase (542 aa).

The segment at 1-266 (MATNYIFVTG…DDFICQRFHL (266 aa)) is amidoligase domain. S14 provides a ligand contact to CTP. S14 contacts UTP. Residues 15-20 (SLGKGI) and D72 each bind ATP. D72 and E140 together coordinate Mg(2+). CTP is bound by residues 147–149 (DIE), 187–192 (KTKPTQ), and K223. UTP contacts are provided by residues 187–192 (KTKPTQ) and K223. ATP is bound at residue 239-241 (KDV). Residues 291–542 (VIGMVGKYTE…VKAAKDNQKK (252 aa)) form the Glutamine amidotransferase type-1 domain. G352 serves as a coordination point for L-glutamine. C379 serves as the catalytic Nucleophile; for glutamine hydrolysis. L-glutamine is bound by residues 380–383 (LGMQ), E403, and R470. Active-site residues include H515 and E517.

The protein belongs to the CTP synthase family. In terms of assembly, homotetramer.

It catalyses the reaction UTP + L-glutamine + ATP + H2O = CTP + L-glutamate + ADP + phosphate + 2 H(+). It carries out the reaction L-glutamine + H2O = L-glutamate + NH4(+). The enzyme catalyses UTP + NH4(+) + ATP = CTP + ADP + phosphate + 2 H(+). The protein operates within pyrimidine metabolism; CTP biosynthesis via de novo pathway; CTP from UDP: step 2/2. Its activity is regulated as follows. Allosterically activated by GTP, when glutamine is the substrate; GTP has no effect on the reaction when ammonia is the substrate. The allosteric effector GTP functions by stabilizing the protein conformation that binds the tetrahedral intermediate(s) formed during glutamine hydrolysis. Inhibited by the product CTP, via allosteric rather than competitive inhibition. Its function is as follows. Catalyzes the ATP-dependent amination of UTP to CTP with either L-glutamine or ammonia as the source of nitrogen. Regulates intracellular CTP levels through interactions with the four ribonucleotide triphosphates. The chain is CTP synthase from Pasteurella multocida (strain Pm70).